Consider the following 785-residue polypeptide: Ubiquitin carboxyl-terminal hydrolase 1 (785 aa).

Disordered stretches follow at residues 1-21 and 33-52; these read MPGVIPSESNGLSRGSPSKKN and TKRALDFTDSQENEEKASEY. The span at 7 to 16 shows a compositional bias: polar residues; the sequence is SESNGLSRGS. Phosphoserine occurs at positions 16, 42, and 67. Positions 81 to 785 constitute a USP domain; it reads VGLNNLGNTC…TPYLLFYKKL (705 aa). The Nucleophile role is filled by Cys-90. 2 stretches are compositionally biased toward basic and acidic residues: residues 258–275 and 286–298; these read EDFKEKLPKGNGKRKSDT and LSKEHQSLEENQR. The interval 258–336 is disordered; sequence EDFKEKLPKG…SPRPSQKKSR (79 aa). Ser-313 and Ser-475 each carry phosphoserine. Residue His-593 is the Proton acceptor of the active site. Residues 693–723 form a disordered region; that stretch reads TAFAENRNSETSDTTGTHESDRNKESSDQTG. Basic and acidic residues predominate over residues 708 to 719; it reads GTHESDRNKESS. A Phosphoserine modification is found at Ser-768.

It belongs to the peptidase C19 family. Interacts with FANCD2 and PCNA. Interacts with WDR48. Interacts with ATAD5; the interaction regulates USP1-mediated PCNA deubiquitination. Post-translationally, autocatalytic cleavage of USP1 following UV irradiation inactivates it, leading to an increase in ubiquitinated PCNA, recruitment of POLH and translesion synthesis. In terms of processing, ubiquitinated by the CRL2(KLHDC2) complex following autocatalytic cleavage, leading to its degradation: the CRL2(KLHDC2) complex recognizes the diglycine (Gly-Gly) at the C-terminus.

The protein localises to the nucleus. It carries out the reaction Thiol-dependent hydrolysis of ester, thioester, amide, peptide and isopeptide bonds formed by the C-terminal Gly of ubiquitin (a 76-residue protein attached to proteins as an intracellular targeting signal).. Negative regulator of DNA damage repair which specifically deubiquitinates monoubiquitinated FANCD2. Also involved in PCNA-mediated translesion synthesis (TLS) by deubiquitinating monoubiquitinated PCNA. Has almost no deubiquitinating activity by itself and requires the interaction with WDR48 to have a high activity. The protein is Ubiquitin carboxyl-terminal hydrolase 1 (USP1) of Homo sapiens (Human).